A 437-amino-acid polypeptide reads, in one-letter code: MADDPSAADRNVEIWKIKKLIKSLEAARGNGTSMISLIIPPKDQISRVAKMLADEFGTASNIKSRVNRLSVLGAITSVQQRLKLYNKVPPNGLVVYCGTIVTEEGKEKKVNIDFEPFKPINTSLYLCDNKFHTEALTALLSDDSKFGFIVIDGSGALFGTLQGNTREVLHKFTVDLPKKHGRGGQSALRFARLRMEKRHNYVRKVAETAVQLFISGDKVNVAGLVLAGSADFKTELSQSDMFDQRLQSKVLKLVDISYGGENGFNQAIELSTEVLSNVKFIQEKKLIGRYFDEISQDTGKYCFGVEDTLKALEMGAVEILIVYENLDTMRYVLRCNGSEEEKTLYLTPEQEKDKSHFIDKETGQEHELIESMPLLEWFANSYKKFGATLEIVTDKSQEGSQFVKGFGGIGGILRYRVDFQGMDYQGVDDEFFDLDDY.

Positions 61–64 (NIKS) match the NIKS motif; plays an important role in translational termination motif.

It belongs to the eukaryotic release factor 1 family. As to quaternary structure, component of the eRF1-eRF3-GTP ternary complex, composed of ETF1/ERF1 and eRF3 (GSPT1/ERF3A or GSPT2/ERF3B) and GTP.

The protein localises to the cytoplasm. Its function is as follows. Component of the eRF1-eRF3-GTP ternary complex, a ternary complex that mediates translation termination in response to the termination codons. The eRF1-eRF3-GTP complex binds to a stop codon in the ribosomal A-site. ETF1/ERF1 is responsible for stop codon recognition and inducing hydrolysis of peptidyl-tRNA. Following GTP hydrolysis, eRF3 (GSPT1/ERF3A or GSPT2/ERF3B) dissociates, permitting ETF1/eRF1 to accommodate fully in the A-site, followed by hydrolysis of peptidyl-tRNA. This is Eukaryotic peptide chain release factor subunit 1 (etf1) from Xenopus laevis (African clawed frog).